Here is a 108-residue protein sequence, read N- to C-terminus: MPKPGILKSKSMFCVIYRSSKRDQTYLYVEKKDDFSRVPEELMKGFGQPQLAMILPLDGRKKLVNADIEKVKLALTEQGYYLQLPPPPEDLLKQHLSVMGQKTDDTNK.

In terms of domain architecture, YcgL spans 12 to 96; the sequence is MFCVIYRSSK…PPEDLLKQHL (85 aa).

The protein is Protein YcgL of Escherichia coli O9:H4 (strain HS).